Here is a 348-residue protein sequence, read N- to C-terminus: Mannonate dehydratase (348 aa).

This sequence belongs to the mannonate dehydratase family. Fe(2+) serves as cofactor. The cofactor is Mn(2+).

The enzyme catalyses D-mannonate = 2-dehydro-3-deoxy-D-gluconate + H2O. The protein operates within carbohydrate metabolism; pentose and glucuronate interconversion. Its function is as follows. Catalyzes the dehydration of D-mannonate. The protein is Mannonate dehydratase of Streptococcus agalactiae serotype V (strain ATCC BAA-611 / 2603 V/R).